The primary structure comprises 355 residues: UDP-N-acetylglucosamine--N-acetylmuramyl-(pentapeptide) pyrophosphoryl-undecaprenol N-acetylglucosamine transferase (355 aa).

Residues 13–15 (TGG), N125, R162, S190, I244, and Q289 contribute to the UDP-N-acetyl-alpha-D-glucosamine site.

The protein belongs to the glycosyltransferase 28 family. MurG subfamily.

Its subcellular location is the cell inner membrane. The enzyme catalyses di-trans,octa-cis-undecaprenyl diphospho-N-acetyl-alpha-D-muramoyl-L-alanyl-D-glutamyl-meso-2,6-diaminopimeloyl-D-alanyl-D-alanine + UDP-N-acetyl-alpha-D-glucosamine = di-trans,octa-cis-undecaprenyl diphospho-[N-acetyl-alpha-D-glucosaminyl-(1-&gt;4)]-N-acetyl-alpha-D-muramoyl-L-alanyl-D-glutamyl-meso-2,6-diaminopimeloyl-D-alanyl-D-alanine + UDP + H(+). It participates in cell wall biogenesis; peptidoglycan biosynthesis. Its function is as follows. Cell wall formation. Catalyzes the transfer of a GlcNAc subunit on undecaprenyl-pyrophosphoryl-MurNAc-pentapeptide (lipid intermediate I) to form undecaprenyl-pyrophosphoryl-MurNAc-(pentapeptide)GlcNAc (lipid intermediate II). The protein is UDP-N-acetylglucosamine--N-acetylmuramyl-(pentapeptide) pyrophosphoryl-undecaprenol N-acetylglucosamine transferase of Neisseria meningitidis serogroup A / serotype 4A (strain DSM 15465 / Z2491).